The chain runs to 513 residues: MTKRALISVSDKTGVTTFAAGLVANGFEIISTGGTRTVLEEAGVPTLAIDDITGFPEMLDGRVKTLHPNIHGGLLAKRGNQAHQKALTEQGIHFIDLVVVNLYPFKETILKPAISEAEAIEMIDIGGPSMLRSAAKNYQDVTAVVDPSDYEQVLSEISSTGTSQLATRKRLAAKVFRHTAAYDALIADYLTTQVGETEPEKQTLTYERKQTLRYGENSHQQATFYQSVVPVSLSIASARQLHGKELSYNNIRDADAALRIASEFTEPTVVAVKHMNPCGIGTGKTILAAYRQAFEADPVSIFGGIVVLNRPVDQATAAEMHQIFLEIIIAPSFEEEALALLSQKKNLRLLTLDFHAQEKKAVELVSVMGGLLIQEQDTVVENDQAWQVVTERQPTPAERDALNFAWKAVKHVKSNAIVLANESQTVGIGAGQMNRIGSVKIAVDQAQAAGKLQGAVLASDAFFPMADSVEYAAQHGIQAIIQPGGSIKDQASIDLANHYGIAMIFTGTRHFKH.

The region spanning 1–145 is the MGS-like domain; sequence MTKRALISVS…KNYQDVTAVV (145 aa).

Belongs to the PurH family.

It carries out the reaction (6R)-10-formyltetrahydrofolate + 5-amino-1-(5-phospho-beta-D-ribosyl)imidazole-4-carboxamide = 5-formamido-1-(5-phospho-D-ribosyl)imidazole-4-carboxamide + (6S)-5,6,7,8-tetrahydrofolate. The catalysed reaction is IMP + H2O = 5-formamido-1-(5-phospho-D-ribosyl)imidazole-4-carboxamide. The protein operates within purine metabolism; IMP biosynthesis via de novo pathway; 5-formamido-1-(5-phospho-D-ribosyl)imidazole-4-carboxamide from 5-amino-1-(5-phospho-D-ribosyl)imidazole-4-carboxamide (10-formyl THF route): step 1/1. It functions in the pathway purine metabolism; IMP biosynthesis via de novo pathway; IMP from 5-formamido-1-(5-phospho-D-ribosyl)imidazole-4-carboxamide: step 1/1. The protein is Bifunctional purine biosynthesis protein PurH of Enterococcus faecalis (strain ATCC 700802 / V583).